The chain runs to 299 residues: Protease HtpX homolog (299 aa).

Helical transmembrane passes span 15–35 (ILLL…GYLF) and 39–59 (GLGG…SMIF). His-143 serves as a coordination point for Zn(2+). Glu-144 is a catalytic residue. Residue His-147 participates in Zn(2+) binding. The next 2 helical transmembrane spans lie at 158 to 178 (IAVA…RMMW) and 198 to 218 (IIML…ATLV). A Zn(2+)-binding site is contributed by Glu-227.

It belongs to the peptidase M48B family. It depends on Zn(2+) as a cofactor.

It localises to the cell membrane. The sequence is that of Protease HtpX homolog from Streptococcus pneumoniae (strain P1031).